We begin with the raw amino-acid sequence, 1045 residues long: Suppression of tumorigenicity 18 protein (1045 aa).

Disordered regions lie at residues 38-90 (KKRR…NDHA), 158-228 (KAES…YNRK), and 340-364 (PRVTDANGRQIFTNKHSPRPERREA). Over residues 52 to 63 (NKRKSLLMKPRH) the composition is skewed to basic residues. Basic and acidic residues-rich tracts occupy residues 69–90 (GCKESPDNRNEDDGLLETNDHA) and 159–177 (AESDEAHEGSMVHSDNGRD). 6 CCHHC-type zinc fingers span residues 357–400 (PRPE…PLEI), 401–444 (LAMH…KLAM), 713–756 (RDLK…LKSL), 757–800 (MAAN…GIKM), 805–848 (EEKE…QKEN), and 858–901 (KLNK…IKKV). C366, C371, H384, C390, C410, C415, H428, C434, C722, C727, H740, C746, C766, C771, H784, C790, C814, C819, H832, C838, C867, C872, H885, and C891 together coordinate Zn(2+). Residues 918-987 (IDGDEEIRHL…KELAGLSQAL (70 aa)) are a coiled coil.

The protein belongs to the MYT1 family.

The protein localises to the nucleus. Repressor that binds to DNA sequences containing a bipartite element consisting of a direct repeat of the sequence 5'-AAAGTTT-3' separated by 2-9 nucleotides. Represses basal transcription activity from target promoters. This Mus musculus (Mouse) protein is Suppression of tumorigenicity 18 protein (St18).